Consider the following 146-residue polypeptide: Hemoglobin subunit beta (146 aa).

Val-1 is subject to N-acetylvaline. The Globin domain maps to 2-146; it reads HLTGEEKAAV…VATALAHKYH (145 aa). Thr-12 carries the post-translational modification Phosphothreonine. A Phosphoserine modification is found at Ser-44. Position 59 is an N6-acetyllysine (Lys-59). His-63 is a heme b binding site. Lys-82 carries the N6-acetyllysine modification. Residue His-92 coordinates heme b. The residue at position 93 (Cys-93) is an S-nitrosocysteine. N6-acetyllysine is present on Lys-144.

Belongs to the globin family. Heterotetramer of two alpha chains and two beta chains. As to expression, red blood cells.

Functionally, involved in oxygen transport from the lung to the various peripheral tissues. This chain is Hemoglobin subunit beta (HBB), found in Macroderma gigas (Australian ghost bat).